Reading from the N-terminus, the 49-residue chain is Toxic protein HokB (49 aa).

Residues 4–24 form a helical membrane-spanning segment; sequence NPLVVCLLIICITILTFTLLT.

It belongs to the Hok/Gef family.

It is found in the cell inner membrane. In terms of biological role, toxic component of a type I toxin-antitoxin (TA) system. When overexpressed kills cells within minutes; causes collapse of the transmembrane potential and arrest of respiration. Expression leads to membrane depolarization; when protein levels are high enough depolarization probably leads to lowered metabolic activity which in turn induces some cells to enter the persistent state in which they transiently survive antibiotic exposure. Its toxic effect is probably neutralized by antisense antitoxin RNA SokB, which is encoded in trans on the opposite DNA strand. This Escherichia coli (strain K12) protein is Toxic protein HokB.